The sequence spans 270 residues: Karrikin insensitive 2 receptor CA (270 aa).

Catalysis depends on S95, which acts as the Nucleophile. Residues D217 and H246 contribute to the active site.

This sequence belongs to the AB hydrolase superfamily. In terms of tissue distribution, expressed in stigma.

It localises to the nucleus. It is found in the cytoplasm. Functionally, hydrolase which may be involved in plant olfaction during volatile communication. The chain is Karrikin insensitive 2 receptor CA from Petunia hybrida (Petunia).